Reading from the N-terminus, the 297-residue chain is Large ribosomal subunit protein uL18 (297 aa).

Position 2 is an N-acetylglycine (G2). 2 positions are modified to N6-acetyllysine: K5 and K48. S185 carries the phosphoserine modification. K220 is modified (N6-acetyllysine; alternate). K220 is covalently cross-linked (Glycyl lysine isopeptide (Lys-Gly) (interchain with G-Cter in SUMO1); alternate). K220 participates in a covalent cross-link: Glycyl lysine isopeptide (Lys-Gly) (interchain with G-Cter in SUMO2); alternate. T232 carries the phosphothreonine modification. Residues 253-297 (YEKKPKKEVKKKRWNRPKMSLAQKKDRVAQKKASFLRAQERAAES) form a disordered region. Residues 258–268 (KKEVKKKRWNR) show a composition bias toward basic residues. S272 is modified (phosphoserine).

It belongs to the universal ribosomal protein uL18 family. Component of the large ribosomal subunit (LSU). Part of the 5S RNP complex, which is a LSU subcomplex composed of the 5S RNA, RPL5 and RPL11. Component of a hexameric 5S RNP precursor complex, composed of 5S RNA, RRS1, RPF2/BXDC1, RPL5, RPL11 and HEATR3; this complex acts as a precursor for ribosome assembly. Interacts with isoform 1 of NVL in an ATP-dependent manner. Interacts with RRP1B. Interacts with IPO5, IPO7 and KPNB1; these interactions may be involved in RPL5 nuclear import for the assembly of ribosomal subunits.

It is found in the cytoplasm. The protein resides in the nucleus. It localises to the nucleolus. Functionally, component of the ribosome, a large ribonucleoprotein complex responsible for the synthesis of proteins in the cell. The small ribosomal subunit (SSU) binds messenger RNAs (mRNAs) and translates the encoded message by selecting cognate aminoacyl-transfer RNA (tRNA) molecules. The large subunit (LSU) contains the ribosomal catalytic site termed the peptidyl transferase center (PTC), which catalyzes the formation of peptide bonds, thereby polymerizing the amino acids delivered by tRNAs into a polypeptide chain. The nascent polypeptides leave the ribosome through a tunnel in the LSU and interact with protein factors that function in enzymatic processing, targeting, and the membrane insertion of nascent chains at the exit of the ribosomal tunnel. As part of the 5S RNP/5S ribonucleoprotein particle it is an essential component of the LSU, required for its formation and the maturation of rRNAs. It also couples ribosome biogenesis to p53/TP53 activation. As part of the 5S RNP it accumulates in the nucleoplasm and inhibits MDM2, when ribosome biogenesis is perturbed, mediating the stabilization and the activation of TP53. In Homo sapiens (Human), this protein is Large ribosomal subunit protein uL18 (RPL5).